Here is a 247-residue protein sequence, read N- to C-terminus: Glucosamine-6-phosphate deaminase (247 aa).

The active-site Proton acceptor; for enolization step is Asp-67. The active-site For ring-opening step is Asn-136. His-138 serves as the catalytic Proton acceptor; for ring-opening step. The active-site For ring-opening step is the Glu-143.

It belongs to the glucosamine/galactosamine-6-phosphate isomerase family. NagB subfamily.

It catalyses the reaction alpha-D-glucosamine 6-phosphate + H2O = beta-D-fructose 6-phosphate + NH4(+). The protein operates within amino-sugar metabolism; N-acetylneuraminate degradation; D-fructose 6-phosphate from N-acetylneuraminate: step 5/5. Catalyzes the reversible isomerization-deamination of glucosamine 6-phosphate (GlcN6P) to form fructose 6-phosphate (Fru6P) and ammonium ion. In Shouchella clausii (strain KSM-K16) (Alkalihalobacillus clausii), this protein is Glucosamine-6-phosphate deaminase.